We begin with the raw amino-acid sequence, 128 residues long: MARIAGVDLPREKRIEVSLQYIYGIGKTSAKLILERANVSPVTRTKDLTDDEVRRIRETIEQNVKVEGDLRREISLNVKRLMDLGCYRGLRHRKGLPVRGQRTHTNARTRKGPKKGLVRKAAAPAPKA.

Over residues 95–118 the composition is skewed to basic residues; that stretch reads GLPVRGQRTHTNARTRKGPKKGLV. Residues 95 to 128 are disordered; it reads GLPVRGQRTHTNARTRKGPKKGLVRKAAAPAPKA.

This sequence belongs to the universal ribosomal protein uS13 family. In terms of assembly, part of the 30S ribosomal subunit. Forms a loose heterodimer with protein S19. Forms two bridges to the 50S subunit in the 70S ribosome.

In terms of biological role, located at the top of the head of the 30S subunit, it contacts several helices of the 16S rRNA. In the 70S ribosome it contacts the 23S rRNA (bridge B1a) and protein L5 of the 50S subunit (bridge B1b), connecting the 2 subunits; these bridges are implicated in subunit movement. Contacts the tRNAs in the A and P-sites. The chain is Small ribosomal subunit protein uS13 from Anaeromyxobacter sp. (strain K).